We begin with the raw amino-acid sequence, 164 residues long: Phosphopantetheine adenylyltransferase (164 aa).

Serine 10 lines the substrate pocket. ATP is bound by residues serine 10–phenylalanine 11 and histidine 18. Substrate contacts are provided by lysine 42, threonine 79, and arginine 93. Residues glycine 94–arginine 96, glutamate 104, and valine 129–serine 135 each bind ATP.

The protein belongs to the bacterial CoaD family. As to quaternary structure, homohexamer. The cofactor is Mg(2+).

It is found in the cytoplasm. It carries out the reaction (R)-4'-phosphopantetheine + ATP + H(+) = 3'-dephospho-CoA + diphosphate. It functions in the pathway cofactor biosynthesis; coenzyme A biosynthesis; CoA from (R)-pantothenate: step 4/5. Reversibly transfers an adenylyl group from ATP to 4'-phosphopantetheine, yielding dephospho-CoA (dPCoA) and pyrophosphate. This is Phosphopantetheine adenylyltransferase from Bradyrhizobium sp. (strain ORS 278).